We begin with the raw amino-acid sequence, 297 residues long: Transmembrane protein 178A (297 aa).

The N-terminal stretch at 1–25 (MEPRALVTALSLGLSLCSLGLLVTA) is a signal peptide. Over 26-179 (IFTDHWYETD…LLHLRRITAG (154 aa)) the chain is Extracellular. Residues 41-57 (ESCERSRAGADPPDQKN) show a composition bias toward basic and acidic residues. Positions 41-84 (ESCERSRAGADPPDQKNRLMPLSHLPLRDSPPLGRRLLPGGPGR) are disordered. The segment covering 68 to 79 (RDSPPLGRRLLP) has biased composition (low complexity). The N-linked (GlcNAc...) asparagine glycan is linked to Asn158. A helical membrane pass occupies residues 180–200 (FLGMAVAVLLCGCIVATVSFF). At 201 to 208 (WEESLTQH) the chain is on the cytoplasmic side. A helical transmembrane segment spans residues 209–229 (VAGLLFLMTGIFCTISLCTYA). Residues 230-257 (ASISYDLNRLPKLIYSLPADVEHGYSWS) lie on the Extracellular side of the membrane. A helical membrane pass occupies residues 258 to 278 (IFCAWCSLGFIVAAGGLCIAY). Over 279 to 297 (PFISRTKIAQLKSGRDSTV) the chain is Cytoplasmic.

This sequence belongs to the TMEM178 family. Interacts with STIM1.

It localises to the endoplasmic reticulum membrane. Acts as a negative regulator of osteoclast differentiation in basal and inflammatory conditions by regulating TNFSF11-induced Ca (2+) fluxes, thereby controlling the induction of NFATC1. This chain is Transmembrane protein 178A (TMEM178A), found in Homo sapiens (Human).